The following is a 124-amino-acid chain: Large ribosomal subunit protein uL18 (124 aa).

Belongs to the universal ribosomal protein uL18 family. Part of the 50S ribosomal subunit; part of the 5S rRNA/L5/L18/L25 subcomplex. Contacts the 5S and 23S rRNAs.

Its function is as follows. This is one of the proteins that bind and probably mediate the attachment of the 5S RNA into the large ribosomal subunit, where it forms part of the central protuberance. This chain is Large ribosomal subunit protein uL18, found in Aquifex aeolicus (strain VF5).